The following is a 209-amino-acid chain: Imidazole glycerol phosphate synthase subunit HisH (209 aa).

The Glutamine amidotransferase type-1 domain occupies 1–205; the sequence is MIAIIDYGMG…KGVVETWKSS (205 aa). Catalysis depends on Cys-79, which acts as the Nucleophile. Active-site residues include His-180 and Glu-182.

As to quaternary structure, heterodimer of HisH and HisF.

The protein resides in the cytoplasm. It catalyses the reaction 5-[(5-phospho-1-deoxy-D-ribulos-1-ylimino)methylamino]-1-(5-phospho-beta-D-ribosyl)imidazole-4-carboxamide + L-glutamine = D-erythro-1-(imidazol-4-yl)glycerol 3-phosphate + 5-amino-1-(5-phospho-beta-D-ribosyl)imidazole-4-carboxamide + L-glutamate + H(+). The catalysed reaction is L-glutamine + H2O = L-glutamate + NH4(+). It participates in amino-acid biosynthesis; L-histidine biosynthesis; L-histidine from 5-phospho-alpha-D-ribose 1-diphosphate: step 5/9. IGPS catalyzes the conversion of PRFAR and glutamine to IGP, AICAR and glutamate. The HisH subunit catalyzes the hydrolysis of glutamine to glutamate and ammonia as part of the synthesis of IGP and AICAR. The resulting ammonia molecule is channeled to the active site of HisF. This chain is Imidazole glycerol phosphate synthase subunit HisH, found in Bacillus anthracis (strain A0248).